A 309-amino-acid polypeptide reads, in one-letter code: tRNA uridine(34) hydroxylase (309 aa).

The Rhodanese domain occupies Ser130–Ser224. Residue Cys184 is the Cysteine persulfide intermediate of the active site.

This sequence belongs to the TrhO family.

The enzyme catalyses uridine(34) in tRNA + AH2 + O2 = 5-hydroxyuridine(34) in tRNA + A + H2O. Catalyzes oxygen-dependent 5-hydroxyuridine (ho5U) modification at position 34 in tRNAs. This is tRNA uridine(34) hydroxylase from Rhizobium johnstonii (strain DSM 114642 / LMG 32736 / 3841) (Rhizobium leguminosarum bv. viciae).